A 190-amino-acid polypeptide reads, in one-letter code: FMN reductase (NADH) RutF (190 aa).

It belongs to the non-flavoprotein flavin reductase family. RutF subfamily.

The catalysed reaction is FMNH2 + NAD(+) = FMN + NADH + 2 H(+). Catalyzes the reduction of FMN to FMNH2 which is used to reduce pyrimidine by RutA via the Rut pathway. In Pantoea ananatis (strain LMG 20103), this protein is FMN reductase (NADH) RutF.